A 663-amino-acid polypeptide reads, in one-letter code: Probable acetolactate synthase 2, chloroplastic (663 aa).

The segment covering 1-26 has biased composition (low complexity); the sequence is MAAAAAAASLSVSDAAAKLPKPGGQV. The tract at residues 1–56 is disordered; it reads MAAAAAAASLSVSDAAAKLPKPGGQVQRRRDRDRPRVDAAACTRDSRRPTRERCST. The N-terminal 79 residues, 1-79, are a transit peptide targeting the chloroplast; sequence MAAAAAAASL…TPVRAPVRTR (79 aa). Basic and acidic residues-rich tracts occupy residues 28-37 and 44-54; these read RRRDRDRPRV and RDSRRPTRERC. Residue E132 participates in thiamine diphosphate binding. An intrachain disulfide couples C152 to C298. Residues R234, 340-361, and 383-402 each bind FAD; these read HGTV…LGVR and DIDP…ICAD. Residues 478 to 558 are thiamine pyrophosphate binding; that stretch reads QHQMWATQHY…VKVMVLNNQH (81 aa). Mg(2+) is bound by residues D529 and N556.

The protein belongs to the TPP enzyme family. Mg(2+) is required as a cofactor. Requires thiamine diphosphate as cofactor.

The protein localises to the plastid. The protein resides in the chloroplast. The catalysed reaction is 2 pyruvate + H(+) = (2S)-2-acetolactate + CO2. Its pathway is amino-acid biosynthesis; L-isoleucine biosynthesis; L-isoleucine from 2-oxobutanoate: step 1/4. It functions in the pathway amino-acid biosynthesis; L-valine biosynthesis; L-valine from pyruvate: step 1/4. This is Probable acetolactate synthase 2, chloroplastic (ALS2) from Oryza sativa subsp. japonica (Rice).